Here is a 61-residue protein sequence, read N- to C-terminus: Small ribosomal subunit protein uS14 (61 aa).

C24, C27, C40, and C43 together coordinate Zn(2+).

Belongs to the universal ribosomal protein uS14 family. Zinc-binding uS14 subfamily. In terms of assembly, part of the 30S ribosomal subunit. Contacts proteins S3 and S10. Requires Zn(2+) as cofactor.

Functionally, binds 16S rRNA, required for the assembly of 30S particles and may also be responsible for determining the conformation of the 16S rRNA at the A site. In Thermotoga neapolitana (strain ATCC 49049 / DSM 4359 / NBRC 107923 / NS-E), this protein is Small ribosomal subunit protein uS14.